The primary structure comprises 805 residues: Shutoff protein (805 aa).

The interval 1 to 88 (MESVEKEDSL…QVGRGDQRHG (88 aa)) is disordered. Positions 18 to 29 (TTASTDAANAPT) are enriched in polar residues. Composition is skewed to basic and acidic residues over residues 59-70 (RSVPTEDKKQDQ) and 79-88 (QVGRGDQRHG). Residues 280–345 (VMSELIVRRA…AVLVTVELEC (66 aa)) form a binding to host EIF4G region. The RRM domain occupies 348–466 (RFFADPEMQR…DLWTAFNERS (119 aa)). Tyrosine 365 and tyrosine 682 each carry phosphotyrosine; by host. A disordered region spans residues 684 to 805 (DPQSGEELNP…AGTACSPTQP (122 aa)). Residues 726-742 (GRGGILGQSGRGGFGRG) are compositionally biased toward gly residues. A compositionally biased stretch (basic residues) spans 754-763 (RSFRGRRGVR).

It belongs to the adenoviridae shutoff protein family. As to quaternary structure, monomer. Interacts with hexon protein; this interaction allows chaperoning and trimerization of hexon proteins. Interacts (via N-terminus) with host initiation factor EIF4G (via C-terminus). Interacts (via RRM domain) with viral mRNAs that contain the tripartite leader; this interaction allows ribosome shunting and expression of viral late mRNAs. Might be cleaved by the viral protease. In terms of processing, phosphorylated. Tyrosine phosphorylation enhances preferential binding to tripartite leader mRNAs and allows ribosome shunting. Post-translationally, methylated. Asymmetric dimethylation by host PRMT1 of the Arg/Gly-rich region may regulate shutoff protein binding to hexon and promote the capsid assembly in the nucleus.

The protein resides in the host cytoplasm. Protein that inhibits host translation while promoting late viral translation by ribosome shunting. Blocks host cap-dependent translation by binding to eIF4G, displacing MKNK1 from cap initiation complexes and preventing EIF4E phosphorylation. Binds to the tripartite leader sequence of viral late mRNAs and recruits host eIF4G, PABPC1/poly-A binding protein and 40S ribosomes subunits on viral mRNAs, allowing ribosome shunting and efficient translation of late viral mRNAs even though conventional translation via ribosome scanning from the cap has been shut off in the host cell. During assembly, acts as a chaperone protein that helps hexon proteins assembly into trimers. This chain is Shutoff protein, found in Homo sapiens (Human).